A 96-amino-acid polypeptide reads, in one-letter code: Integration host factor subunit beta (96 aa).

It belongs to the bacterial histone-like protein family. In terms of assembly, heterodimer of an alpha and a beta chain.

This protein is one of the two subunits of integration host factor, a specific DNA-binding protein that functions in genetic recombination as well as in transcriptional and translational control. In Caulobacter vibrioides (strain ATCC 19089 / CIP 103742 / CB 15) (Caulobacter crescentus), this protein is Integration host factor subunit beta.